Here is a 621-residue protein sequence, read N- to C-terminus: UvrABC system protein C (621 aa).

Residues 13-92 (EKPGVYMMRN…IKENRPKYNV (80 aa)) enclose the GIY-YIG domain. The 36-residue stretch at 205–240 (DELVRKIEEKMKAAAISMDFENAARYRDQIIALNNI) folds into the UVR domain.

This sequence belongs to the UvrC family. In terms of assembly, interacts with UvrB in an incision complex.

Its subcellular location is the cytoplasm. In terms of biological role, the UvrABC repair system catalyzes the recognition and processing of DNA lesions. UvrC both incises the 5' and 3' sides of the lesion. The N-terminal half is responsible for the 3' incision and the C-terminal half is responsible for the 5' incision. The sequence is that of UvrABC system protein C from Alkaliphilus oremlandii (strain OhILAs) (Clostridium oremlandii (strain OhILAs)).